A 379-amino-acid polypeptide reads, in one-letter code: UDP-4-amino-4-deoxy-L-arabinose--oxoglutarate aminotransferase (379 aa).

K182 carries the N6-(pyridoxal phosphate)lysine modification.

This sequence belongs to the DegT/DnrJ/EryC1 family. ArnB subfamily. As to quaternary structure, homodimer. It depends on pyridoxal 5'-phosphate as a cofactor.

It carries out the reaction UDP-4-amino-4-deoxy-beta-L-arabinose + 2-oxoglutarate = UDP-beta-L-threo-pentopyranos-4-ulose + L-glutamate. Its pathway is nucleotide-sugar biosynthesis; UDP-4-deoxy-4-formamido-beta-L-arabinose biosynthesis; UDP-4-deoxy-4-formamido-beta-L-arabinose from UDP-alpha-D-glucuronate: step 2/3. The protein operates within bacterial outer membrane biogenesis; lipopolysaccharide biosynthesis. Catalyzes the conversion of UDP-4-keto-arabinose (UDP-Ara4O) to UDP-4-amino-4-deoxy-L-arabinose (UDP-L-Ara4N). The modified arabinose is attached to lipid A and is required for resistance to polymyxin and cationic antimicrobial peptides. In Escherichia coli O127:H6 (strain E2348/69 / EPEC), this protein is UDP-4-amino-4-deoxy-L-arabinose--oxoglutarate aminotransferase.